Here is a 356-residue protein sequence, read N- to C-terminus: Xylose/arabinose import permease protein XylH (356 aa).

A run of 10 helical transmembrane segments spans residues 14-34 (LFLV…AYFS), 41-61 (IFQY…LMLC), 70-90 (ALAN…YQAI), 96-116 (IVVS…MNGL), 126-146 (LITT…YSGG), 161-181 (VSIL…LILL), 211-231 (VKII…IIQG), 242-262 (FTAD…TSLV), 266-286 (GSLV…NGFN), and 287-307 (ILGI…VVVM).

It belongs to the binding-protein-dependent transport system permease family. The complex is composed of two ATP-binding proteins (XylG), two transmembrane proteins (XylH) and a solute-binding protein (XylF).

It is found in the cell membrane. In terms of biological role, part of the ABC transporter complex XylFGH involved in the uptake of xylose and arabinose. Responsible for the translocation of the substrate across the membrane. The protein is Xylose/arabinose import permease protein XylH of Sulfolobus acidocaldarius (strain ATCC 33909 / DSM 639 / JCM 8929 / NBRC 15157 / NCIMB 11770).